A 411-amino-acid polypeptide reads, in one-letter code: Na(+)-translocating NADH-quinone reductase subunit F (411 aa).

A helical transmembrane segment spans residues 5 to 25; the sequence is VILALGIAAFTVIVLVLVAII. Positions 36-130 constitute a 2Fe-2S ferredoxin-type domain; the sequence is GDITIDINDD…NMEVELPEEI (95 aa). Residues cysteine 73, cysteine 79, cysteine 82, and cysteine 114 each coordinate [2Fe-2S] cluster. Positions 133–273 constitute an FAD-binding FR-type domain; it reads VKKWECTVIS…SGPFGEFFAK (141 aa).

Belongs to the NqrF family. As to quaternary structure, composed of six subunits; NqrA, NqrB, NqrC, NqrD, NqrE and NqrF. Requires [2Fe-2S] cluster as cofactor. FAD serves as cofactor.

The protein localises to the cell inner membrane. It carries out the reaction a ubiquinone + n Na(+)(in) + NADH + H(+) = a ubiquinol + n Na(+)(out) + NAD(+). Its function is as follows. NQR complex catalyzes the reduction of ubiquinone-1 to ubiquinol by two successive reactions, coupled with the transport of Na(+) ions from the cytoplasm to the periplasm. The first step is catalyzed by NqrF, which accepts electrons from NADH and reduces ubiquinone-1 to ubisemiquinone by a one-electron transfer pathway. The polypeptide is Na(+)-translocating NADH-quinone reductase subunit F (Haemophilus influenzae (strain 86-028NP)).